A 450-amino-acid chain; its full sequence is Phosphoglucosamine mutase (450 aa).

Serine 102 (phosphoserine intermediate) is an active-site residue. Residues serine 102, aspartate 243, aspartate 245, and aspartate 247 each coordinate Mg(2+). Serine 102 is modified (phosphoserine).

It belongs to the phosphohexose mutase family. It depends on Mg(2+) as a cofactor. Post-translationally, activated by phosphorylation.

It catalyses the reaction alpha-D-glucosamine 1-phosphate = D-glucosamine 6-phosphate. Catalyzes the conversion of glucosamine-6-phosphate to glucosamine-1-phosphate. In Rhizobium johnstonii (strain DSM 114642 / LMG 32736 / 3841) (Rhizobium leguminosarum bv. viciae), this protein is Phosphoglucosamine mutase.